A 97-amino-acid polypeptide reads, in one-letter code: Osteocalcin (97 aa).

A signal peptide spans 1 to 20; sequence MKAAALLLLAALLTFSLCRS. Positions 21-48 are excised as a propeptide; sequence APDGSDARSAKAFISHRQRAEMVRRQKR. Positions 49 to 95 constitute a Gla domain; that stretch reads HYAQDSGVAGAPPNPLEAQREVCELSPDCDELADQIGFQEAYRRFYG. Residues E65, E69, E72, and D78 each contribute to the Ca(2+) site. E65, E69, and E72 each carry 4-carboxyglutamate. C71 and C77 are joined by a disulfide.

It belongs to the osteocalcin/matrix Gla protein family. Post-translationally, gamma-carboxyglutamate residues are formed by vitamin K dependent carboxylation by GGCX. These residues are essential for the binding of calcium.

It is found in the secreted. Functionally, the carboxylated form is one of the main organic components of the bone matrix, which constitutes 1-2% of the total bone protein. The carboxylated form binds strongly to apatite and calcium. The chain is Osteocalcin (BGLAP) from Gallus gallus (Chicken).